Consider the following 175-residue polypeptide: NADH-quinone oxidoreductase subunit I (175 aa).

2 consecutive 4Fe-4S ferredoxin-type domains span residues 69–98 (KRDE…IEAA) and 115–144 (KKFE…LDGT). The [4Fe-4S] cluster site is built by cysteine 78, cysteine 81, cysteine 84, cysteine 88, cysteine 124, cysteine 127, cysteine 130, and cysteine 134.

It belongs to the complex I 23 kDa subunit family. As to quaternary structure, NDH-1 is composed of 14 different subunits. Subunits NuoA, H, J, K, L, M, N constitute the membrane sector of the complex. Requires [4Fe-4S] cluster as cofactor.

Its subcellular location is the cell inner membrane. It catalyses the reaction a quinone + NADH + 5 H(+)(in) = a quinol + NAD(+) + 4 H(+)(out). In terms of biological role, NDH-1 shuttles electrons from NADH, via FMN and iron-sulfur (Fe-S) centers, to quinones in the respiratory chain. The immediate electron acceptor for the enzyme in this species is believed to be ubiquinone. Couples the redox reaction to proton translocation (for every two electrons transferred, four hydrogen ions are translocated across the cytoplasmic membrane), and thus conserves the redox energy in a proton gradient. This is NADH-quinone oxidoreductase subunit I from Leptospira biflexa serovar Patoc (strain Patoc 1 / Ames).